We begin with the raw amino-acid sequence, 418 residues long: Glutamyl-tRNA reductase (418 aa).

Residues 49-52 (TCNR), S107, 112-114 (EPQ), and Q118 contribute to the substrate site. The active-site Nucleophile is the C50. 187–192 (GAGETI) provides a ligand contact to NADP(+).

Belongs to the glutamyl-tRNA reductase family. As to quaternary structure, homodimer.

It catalyses the reaction (S)-4-amino-5-oxopentanoate + tRNA(Glu) + NADP(+) = L-glutamyl-tRNA(Glu) + NADPH + H(+). It functions in the pathway porphyrin-containing compound metabolism; protoporphyrin-IX biosynthesis; 5-aminolevulinate from L-glutamyl-tRNA(Glu): step 1/2. Its function is as follows. Catalyzes the NADPH-dependent reduction of glutamyl-tRNA(Glu) to glutamate 1-semialdehyde (GSA). The chain is Glutamyl-tRNA reductase from Vibrio campbellii (strain ATCC BAA-1116).